Consider the following 309-residue polypeptide: Protoheme IX farnesyltransferase (309 aa).

Helical transmembrane passes span valine 30–valine 49, isoleucine 53–tyrosine 75, alanine 98–leucine 118, valine 123–leucine 143, isoleucine 151–glycine 171, valine 178–phenylalanine 198, isoleucine 224–alanine 244, valine 247–tryptophan 267, and valine 285–isoleucine 305.

Belongs to the UbiA prenyltransferase family. Protoheme IX farnesyltransferase subfamily. In terms of assembly, interacts with CtaA.

Its subcellular location is the cell inner membrane. It carries out the reaction heme b + (2E,6E)-farnesyl diphosphate + H2O = Fe(II)-heme o + diphosphate. It functions in the pathway porphyrin-containing compound metabolism; heme O biosynthesis; heme O from protoheme: step 1/1. Its function is as follows. Converts heme B (protoheme IX) to heme O by substitution of the vinyl group on carbon 2 of heme B porphyrin ring with a hydroxyethyl farnesyl side group. This chain is Protoheme IX farnesyltransferase, found in Jannaschia sp. (strain CCS1).